Consider the following 443-residue polypeptide: Differentially expressed in FDCP 8 homolog A (443 aa).

The segment at 1–49 is disordered; that stretch reads MEYDDKLVRFRQGHLNPFDKQGGAERHPADSEAQPPKDSSTISPHSIPE. 2 Phorbol-ester/DAG-type zinc fingers span residues 134–185 and 364–424; these read EHRF…TKPC and IHTT…STSC.

Belongs to the DEF8 family.

Positively regulates lysosome peripheral distribution and ruffled border formation in osteoclasts. Involved in bone resorption. The chain is Differentially expressed in FDCP 8 homolog A (def8-a) from Xenopus laevis (African clawed frog).